Reading from the N-terminus, the 424-residue chain is MTIKANYDSAKQAYEKWGIDVEEALRQLEQVPISIHCWQGDDIEGFEVNKGELSGGIDVTGNYPGKAQTPEELRRDLEKALSLIPGKHRVNLHAIYAETNREAVERDELKPQHFENWVKWAKNLGLGLDFNPTLFSHEKAADGLTLSHPDPDIREFWIRHCIACRRIGEYFGKELGTPCLTNIWIPDGYKDIPSDRLTPRKRLKESLDRIFSEEISEQHNLDSIESKLFGLGSESYVVGSHEFYLAYALTNHKLCLLDTGHFHPTETVSNKISSMLLYTDKLALHVSRPVRWDSDHVVVLDDELREIALEIVRNHALEKVAIGLDFFDASINRVAAWTIGTRNMIKALLYALLLPNGYLKQLQEEGRYTERLALMEEFKTYPFGAIWDSYCEQMGVPVKEAWLYDIKEYEQQVLLKRKASSPIV.

Mn(2+)-binding residues include His-261, Asp-293, and Asp-295.

Belongs to the rhamnose isomerase family. The cofactor is Mn(2+).

Its subcellular location is the cytoplasm. It catalyses the reaction L-rhamnopyranose = L-rhamnulose. It functions in the pathway carbohydrate degradation; L-rhamnose degradation; glycerone phosphate from L-rhamnose: step 1/3. Catalyzes the interconversion of L-rhamnose and L-rhamnulose. The sequence is that of L-rhamnose isomerase from Bacillus subtilis (strain 168).